Reading from the N-terminus, the 343-residue chain is Holliday junction branch migration complex subunit RuvB (343 aa).

The tract at residues 1–23 is disordered; it reads MSDDFEVVRPEEQAGDEKDRDLR. The interval 1–183 is large ATPase domain (RuvB-L); sequence MSDDFEVVRP…FGIVQRFEFY (183 aa). ATP is bound by residues Leu22, Arg23, Gly64, Lys67, Thr68, Thr69, 130–132, Arg173, Tyr183, and Arg220; that span reads EDY. Thr68 is a binding site for Mg(2+). Positions 184 to 254 are small ATPAse domain (RuvB-S); the sequence is SHEELASIIS…TVAAGLKQLN (71 aa). Residues 257–343 form a head domain (RuvB-H) region; the sequence is GLGLETYDRQ…LGDGQEGLFD (87 aa). The DNA site is built by Arg312 and Arg317.

The protein belongs to the RuvB family. In terms of assembly, homohexamer. Forms an RuvA(8)-RuvB(12)-Holliday junction (HJ) complex. HJ DNA is sandwiched between 2 RuvA tetramers; dsDNA enters through RuvA and exits via RuvB. An RuvB hexamer assembles on each DNA strand where it exits the tetramer. Each RuvB hexamer is contacted by two RuvA subunits (via domain III) on 2 adjacent RuvB subunits; this complex drives branch migration. In the full resolvosome a probable DNA-RuvA(4)-RuvB(12)-RuvC(2) complex forms which resolves the HJ.

It localises to the cytoplasm. It catalyses the reaction ATP + H2O = ADP + phosphate + H(+). In terms of biological role, the RuvA-RuvB-RuvC complex processes Holliday junction (HJ) DNA during genetic recombination and DNA repair, while the RuvA-RuvB complex plays an important role in the rescue of blocked DNA replication forks via replication fork reversal (RFR). RuvA specifically binds to HJ cruciform DNA, conferring on it an open structure. The RuvB hexamer acts as an ATP-dependent pump, pulling dsDNA into and through the RuvAB complex. RuvB forms 2 homohexamers on either side of HJ DNA bound by 1 or 2 RuvA tetramers; 4 subunits per hexamer contact DNA at a time. Coordinated motions by a converter formed by DNA-disengaged RuvB subunits stimulates ATP hydrolysis and nucleotide exchange. Immobilization of the converter enables RuvB to convert the ATP-contained energy into a lever motion, pulling 2 nucleotides of DNA out of the RuvA tetramer per ATP hydrolyzed, thus driving DNA branch migration. The RuvB motors rotate together with the DNA substrate, which together with the progressing nucleotide cycle form the mechanistic basis for DNA recombination by continuous HJ branch migration. Branch migration allows RuvC to scan DNA until it finds its consensus sequence, where it cleaves and resolves cruciform DNA. In Treponema denticola (strain ATCC 35405 / DSM 14222 / CIP 103919 / JCM 8153 / KCTC 15104), this protein is Holliday junction branch migration complex subunit RuvB.